Reading from the N-terminus, the 76-residue chain is Small ribosomal subunit protein bS18 (76 aa).

The protein belongs to the bacterial ribosomal protein bS18 family. As to quaternary structure, part of the 30S ribosomal subunit. Forms a tight heterodimer with protein bS6.

Functionally, binds as a heterodimer with protein bS6 to the central domain of the 16S rRNA, where it helps stabilize the platform of the 30S subunit. This chain is Small ribosomal subunit protein bS18, found in Xanthomonas euvesicatoria pv. vesicatoria (strain 85-10) (Xanthomonas campestris pv. vesicatoria).